Consider the following 31-residue polypeptide: Photosystem II reaction center protein T (31 aa).

Residues 3–23 (SFAYVLILTFAIATLFFAIAF) form a helical membrane-spanning segment.

The protein belongs to the PsbT family. In terms of assembly, PSII is composed of 1 copy each of membrane proteins PsbA, PsbB, PsbC, PsbD, PsbE, PsbF, PsbH, PsbI, PsbJ, PsbK, PsbL, PsbM, PsbT, PsbX, PsbY, PsbZ, Psb30/Ycf12, peripheral proteins PsbO, CyanoQ (PsbQ), PsbU, PsbV and a large number of cofactors. It forms dimeric complexes.

The protein resides in the cellular thylakoid membrane. In terms of biological role, found at the monomer-monomer interface of the photosystem II (PS II) dimer, plays a role in assembly and dimerization of PSII. PSII is a light-driven water plastoquinone oxidoreductase, using light energy to abstract electrons from H(2)O, generating a proton gradient subsequently used for ATP formation. This chain is Photosystem II reaction center protein T, found in Synechococcus sp. (strain CC9902).